Here is a 346-residue protein sequence, read N- to C-terminus: PhoH-like protein (346 aa).

142-149 is an ATP binding site; it reads GPAGTGKT.

This sequence belongs to the PhoH family.

The protein localises to the cytoplasm. The sequence is that of PhoH-like protein (ybeZ) from Escherichia coli O157:H7.